The primary structure comprises 66 residues: Stress-induced protein KIN2 (66 aa).

Residues 1–10 (MSETNKNAFQ) show a composition bias toward polar residues. Residues 1-20 (MSETNKNAFQAGQAAGKAEE) form a disordered region. Repeats lie at residues 31–35 (DAAAA) and 49–53 (DAAVG).

As to quaternary structure, interacts with DEK3. Expressed at high levels in embryos and mature seeds.

This chain is Stress-induced protein KIN2, found in Arabidopsis thaliana (Mouse-ear cress).